Reading from the N-terminus, the 359-residue chain is MSSAQLRLVEKDSMDKQKALDAALSQIERAFGKGSIMKLGARENLVETEVISTGSLGLDIALGIGGLPKGRIVEIYGPESSGKTTLALHAIAQAQKAGGTCAFVDAEHALDPSYARKLGVNIDELLISQPDAGEQALEIADTLVRSGAIDVLVVDSVAALVPRAELEGEMGDSHVGLHARLMSQALRKLTGSISKSNCLVIFINQIRLKIGVMFGNPETTTGGNALKFYASVRLDIRRIGSIKDRDTVVGNQTRVKVVKNKMAPPFRVVEFDIMYGEGVSKVGELLDLGIQAGVVDKSGAWFSYDGTRIGQGRENAKTYLRNNPEMADAIEAKIRGNAGLVADAMMGTPEADGEASTPE.

77–84 (GPESSGKT) is an ATP binding site.

This sequence belongs to the RecA family.

The protein resides in the cytoplasm. In terms of biological role, can catalyze the hydrolysis of ATP in the presence of single-stranded DNA, the ATP-dependent uptake of single-stranded DNA by duplex DNA, and the ATP-dependent hybridization of homologous single-stranded DNAs. It interacts with LexA causing its activation and leading to its autocatalytic cleavage. This chain is Protein RecA, found in Azospirillum lipoferum (strain 4B).